The primary structure comprises 393 residues: Probable acetyl-CoA acyltransferase (393 aa).

Residue Cys88 is the Acyl-thioester intermediate of the active site. Catalysis depends on proton acceptor residues His349 and Cys378.

This sequence belongs to the thiolase-like superfamily. Thiolase family.

Its subcellular location is the cytoplasm. It carries out the reaction 2 acetyl-CoA = acetoacetyl-CoA + CoA. This Staphylococcus aureus (strain COL) protein is Probable acetyl-CoA acyltransferase.